The following is a 215-amino-acid chain: Adenylate kinase (215 aa).

10-15 (GAGKGT) is an ATP binding site. Residues 30-59 (STGDILRANVRDGTKLGKEAKGYMDKGELV) are NMP. AMP-binding positions include T31, R36, 57–59 (ELV), 85–88 (GYPR), and Q92. The tract at residues 126 to 162 (GRYVCTCGESYHMKFNPPKKENVCDACGADLYQRDDD) is LID. Position 127 (R127) interacts with ATP. Residues C130 and C132 each contribute to the Zn(2+) site. Residue 135 to 136 (SY) coordinates ATP. Zn(2+) contacts are provided by C149 and C152. Residues R159 and R170 each coordinate AMP. G198 is a binding site for ATP.

It belongs to the adenylate kinase family. Monomer.

It localises to the cytoplasm. It catalyses the reaction AMP + ATP = 2 ADP. Its pathway is purine metabolism; AMP biosynthesis via salvage pathway; AMP from ADP: step 1/1. In terms of biological role, catalyzes the reversible transfer of the terminal phosphate group between ATP and AMP. Plays an important role in cellular energy homeostasis and in adenine nucleotide metabolism. The chain is Adenylate kinase from Methanococcoides burtonii (strain DSM 6242 / NBRC 107633 / OCM 468 / ACE-M).